A 71-amino-acid polypeptide reads, in one-letter code: Conotoxin Bu24 (71 aa).

Positions 1–21 (MGMRMMVTVFLLVVLATTVVS) are cleaved as a signal peptide. The propeptide occupies 22–44 (LRSNRASDGRRGIVNKLNDLVPK). Residue asparagine 70 is modified to Asparagine amide.

The protein belongs to the conotoxin A superfamily. Post-translationally, contains 3 disulfide bonds. They are not indicated here, since framework IV presents two different connectivities (I-V, II-III, IV-VI and I-III, II-V, IV-VI). Expressed by the venom duct.

Its subcellular location is the secreted. This is Conotoxin Bu24 from Conus bullatus (Bubble cone).